The following is a 192-amino-acid chain: Imidazole glycerol phosphate synthase subunit HisH (192 aa).

Residues 1-192 enclose the Glutamine amidotransferase type-1 domain; it reads MIVIVDYGLG…QAIQGGFIND (192 aa). The Nucleophile role is filled by C77. Catalysis depends on residues H169 and E171.

In terms of assembly, heterodimer of HisH and HisF.

The protein resides in the cytoplasm. The catalysed reaction is 5-[(5-phospho-1-deoxy-D-ribulos-1-ylimino)methylamino]-1-(5-phospho-beta-D-ribosyl)imidazole-4-carboxamide + L-glutamine = D-erythro-1-(imidazol-4-yl)glycerol 3-phosphate + 5-amino-1-(5-phospho-beta-D-ribosyl)imidazole-4-carboxamide + L-glutamate + H(+). The enzyme catalyses L-glutamine + H2O = L-glutamate + NH4(+). The protein operates within amino-acid biosynthesis; L-histidine biosynthesis; L-histidine from 5-phospho-alpha-D-ribose 1-diphosphate: step 5/9. In terms of biological role, IGPS catalyzes the conversion of PRFAR and glutamine to IGP, AICAR and glutamate. The HisH subunit catalyzes the hydrolysis of glutamine to glutamate and ammonia as part of the synthesis of IGP and AICAR. The resulting ammonia molecule is channeled to the active site of HisF. This chain is Imidazole glycerol phosphate synthase subunit HisH, found in Staphylococcus aureus (strain COL).